Reading from the N-terminus, the 271-residue chain is Formamidopyrimidine-DNA glycosylase (271 aa).

The active-site Schiff-base intermediate with DNA is Pro2. The active-site Proton donor is the Glu3. Catalysis depends on Lys58, which acts as the Proton donor; for beta-elimination activity. Positions 92, 111, and 152 each coordinate DNA. An FPG-type zinc finger spans residues 237-271 (TVYGREGEPCKQCGRVLKHAMIGQRATVWCGSCQR). Arg261 (proton donor; for delta-elimination activity) is an active-site residue.

This sequence belongs to the FPG family. Monomer. Zn(2+) serves as cofactor.

It carries out the reaction Hydrolysis of DNA containing ring-opened 7-methylguanine residues, releasing 2,6-diamino-4-hydroxy-5-(N-methyl)formamidopyrimidine.. It catalyses the reaction 2'-deoxyribonucleotide-(2'-deoxyribose 5'-phosphate)-2'-deoxyribonucleotide-DNA = a 3'-end 2'-deoxyribonucleotide-(2,3-dehydro-2,3-deoxyribose 5'-phosphate)-DNA + a 5'-end 5'-phospho-2'-deoxyribonucleoside-DNA + H(+). Functionally, involved in base excision repair of DNA damaged by oxidation or by mutagenic agents. Acts as a DNA glycosylase that recognizes and removes damaged bases. Has a preference for oxidized purines, such as 7,8-dihydro-8-oxoguanine (8-oxoG). Has AP (apurinic/apyrimidinic) lyase activity and introduces nicks in the DNA strand. Cleaves the DNA backbone by beta-delta elimination to generate a single-strand break at the site of the removed base with both 3'- and 5'-phosphates. The sequence is that of Formamidopyrimidine-DNA glycosylase from Xanthomonas oryzae pv. oryzae (strain MAFF 311018).